Reading from the N-terminus, the 185-residue chain is Lipid A acyltransferase PagP (185 aa).

The first 14 residues, 1–14, serve as a signal peptide directing secretion; sequence MKLKPVLYLLMLLG. The N-palmitoyl cysteine moiety is linked to residue cysteine 15. Residue cysteine 15 is the site of S-diacylglycerol cysteine attachment. Active-site residues include histidine 57, aspartate 100, and serine 101.

The protein belongs to the lipid A palmitoyltransferase family. Homodimer.

It localises to the cell outer membrane. The catalysed reaction is a lipid A + a 1,2-diacyl-sn-glycero-3-phosphocholine = a hepta-acyl lipid A + a 2-acyl-sn-glycero-3-phosphocholine. It carries out the reaction a lipid IVA + a 1,2-diacyl-sn-glycero-3-phosphocholine = a lipid IVB + a 2-acyl-sn-glycero-3-phosphocholine. The enzyme catalyses a lipid IIA + a 1,2-diacyl-sn-glycero-3-phosphocholine = a lipid IIB + a 2-acyl-sn-glycero-3-phosphocholine. Its function is as follows. Transfers a fatty acid residue from the sn-1 position of a phospholipid to the N-linked hydroxyfatty acid chain on the proximal unit of lipid A or its precursors. The protein is Lipid A acyltransferase PagP of Erwinia pyrifoliae (strain DSM 12163 / CIP 106111 / Ep16/96).